Here is a 385-residue protein sequence, read N- to C-terminus: Pepsin A (385 aa).

Positions 1-15 (MKWLLLLSLVVLSEC) are cleaved as a signal peptide. Positions 16 to 59 (LVKVPLVRKKSLRQNLIKNGKLKDFLKTHKHNPASKYFPEAAAL) are cleaved as a propeptide — activation peptide. Positions 73–382 (YFGTIGIGTP…DRANNKVGLA (310 aa)) constitute a Peptidase A1 domain. The active site involves aspartate 91. The cysteines at positions 104 and 109 are disulfide-linked. Residue serine 127 is modified to Phosphoserine. Cysteine 265 and cysteine 269 are joined by a disulfide. The active site involves aspartate 274. Cysteine 308 and cysteine 341 are oxidised to a cystine.

This sequence belongs to the peptidase A1 family. Minor amounts of the active enzyme occur with 'Ala-58' at the amino end.

Its subcellular location is the secreted. It carries out the reaction Preferential cleavage: hydrophobic, preferably aromatic, residues in P1 and P1' positions. Cleaves 1-Phe-|-Val-2, 4-Gln-|-His-5, 13-Glu-|-Ala-14, 14-Ala-|-Leu-15, 15-Leu-|-Tyr-16, 16-Tyr-|-Leu-17, 23-Gly-|-Phe-24, 24-Phe-|-Phe-25 and 25-Phe-|-Tyr-26 bonds in the B chain of insulin.. Functionally, shows particularly broad specificity; although bonds involving phenylalanine and leucine are preferred, many others are also cleaved to some extent. In Sus scrofa (Pig), this protein is Pepsin A (PGA).